The primary structure comprises 444 residues: Protein kinase C and casein kinase substrate in neurons protein 1 (444 aa).

Residues S2 and S79 each carry the phosphoserine modification. The 271-residue stretch at 13–283 (EETTDSFWEV…AIRGADAQED (271 aa)) folds into the F-BAR domain. Residues 26 to 275 (KRTVKRIDDG…HVYRELEQAI (250 aa)) are a coiled coil. Disordered stretches follow at residues 175 to 194 (MNSK…LQDK) and 309 to 386 (LPHT…DDSK). T184 is subject to Phosphothreonine. The span at 314-324 (TKKEKQPKKAE) shows a compositional bias: basic and acidic residues. The segment covering 329–351 (TNATGAVESTSQAGDRGSVSSYD) has biased composition (polar residues). S346, S348, S349, S361, and S365 each carry phosphoserine. The region spanning 385 to 444 (SKGVRVRALYDYDGQEQDELSFKAGDELTKLGEEDEQGWCRGRLDSGQLGLYPANYVEAI) is the SH3 domain. Phosphotyrosine is present on Y394. S405 and S430 each carry phosphoserine.

The protein belongs to the PACSIN family. In terms of assembly, may form heterooligomers with other PACSINs. Interacts with MAPT. Interacts with TRPV4. Interacts (via SH3 domain) with SYNJ1 and WASL. Interacts with DNM2 and DNM3. Interacts with both COBL and DBNL. Identified in a complex composed of COBL, PACSIN1 and WASL. Interacts with EHD1 and EHD3. Homodimer. Interacts (via SH3 domain) with DNM1; the interaction is reduced by DNM1 phosphorylation. Post-translationally, phosphorylated by casein kinase 2 (CK2) and protein kinase C (PKC). As to expression, highly expressed in brain and, at much lower levels, in heart and pancreas.

The protein resides in the cytoplasm. Its subcellular location is the cell projection. It localises to the synapse. The protein localises to the synaptosome. It is found in the ruffle membrane. The protein resides in the membrane. Its subcellular location is the cytoplasmic vesicle membrane. It localises to the cytosol. The protein localises to the cell membrane. Plays a role in the reorganization of the microtubule cytoskeleton via its interaction with MAPT; this decreases microtubule stability and inhibits MAPT-induced microtubule polymerization. Plays a role in cellular transport processes by recruiting DNM1, DNM2 and DNM3 to membranes. Plays a role in the reorganization of the actin cytoskeleton and in neuron morphogenesis via its interaction with COBL and WASL, and by recruiting COBL to the cell cortex. Plays a role in the regulation of neurite formation, neurite branching and the regulation of neurite length. Required for normal synaptic vesicle endocytosis; this process retrieves previously released neurotransmitters to accommodate multiple cycles of neurotransmission. Required for normal excitatory and inhibitory synaptic transmission. Binds to membranes via its F-BAR domain and mediates membrane tubulation. The protein is Protein kinase C and casein kinase substrate in neurons protein 1 (PACSIN1) of Homo sapiens (Human).